A 473-amino-acid polypeptide reads, in one-letter code: MKTLYSLRRFYHVETLFNGTLALAGRDQETTGFAWWAGNARLINLSGKLLGAHVAHAGLIVFWAGAMNLFEVAHFVPEKPMYEQGLILLPHLATLGWGVGPGGEVIDTFPYFVSGVLHLISSAVLGFGGIYHALLGPETLEESFPFFGYVWKDRNKMTTILGIHLILLGLGAFLLVFKALYFGGVYDTWAPGGGDVRKITNLTLSPSIIFGYLLKSPFGGEGWIVSVDDLEDIIGGHVWLGSICILGGIWHILTKPFAWARRALVWSGEAYLSYSLGALSVFGFIACCFVWFNNTAYPSEFYGPTGPEASQAQAFTFLVRDQRLGANVGSAQGPTGLGKYLMRSPTGEVIFGGETMRFWDLRAPWLEPLRGPNGLDLSRLKKDIQPWQERRSAEYMTHAPLGSLNSVGGVATEINAVNYVSPRSWLATSHFVLGFFFFVGHLWHAGRARAAAAGFEKGIDRDFEPVLSMTPLN.

The propeptide occupies 1-14 (MKTLYSLRRFYHVE). Position 15 is an N-acetylthreonine (Thr-15). The residue at position 15 (Thr-15) is a Phosphothreonine. 5 helical membrane-spanning segments follow: residues 69 to 93 (LFEV…PHLA), 134 to 155 (LLGP…KDRN), 178 to 200 (KALY…RKIT), 255 to 275 (KPFA…LSYS), and 291 to 312 (WFNN…ASQA). A [CaMn4O5] cluster-binding site is contributed by Glu-367. The helical transmembrane segment at 447–471 (RARAAAAGFEKGIDRDFEPVLSMTP) threads the bilayer.

Belongs to the PsbB/PsbC family. PsbC subfamily. As to quaternary structure, PSII is composed of 1 copy each of membrane proteins PsbA, PsbB, PsbC, PsbD, PsbE, PsbF, PsbH, PsbI, PsbJ, PsbK, PsbL, PsbM, PsbT, PsbX, PsbY, PsbZ, Psb30/Ycf12, at least 3 peripheral proteins of the oxygen-evolving complex and a large number of cofactors. It forms dimeric complexes. The cofactor is Binds multiple chlorophylls and provides some of the ligands for the Ca-4Mn-5O cluster of the oxygen-evolving complex. It may also provide a ligand for a Cl- that is required for oxygen evolution. PSII binds additional chlorophylls, carotenoids and specific lipids..

The protein localises to the plastid. Its subcellular location is the chloroplast thylakoid membrane. Its function is as follows. One of the components of the core complex of photosystem II (PSII). It binds chlorophyll and helps catalyze the primary light-induced photochemical processes of PSII. PSII is a light-driven water:plastoquinone oxidoreductase, using light energy to abstract electrons from H(2)O, generating O(2) and a proton gradient subsequently used for ATP formation. In Nicotiana tabacum (Common tobacco), this protein is Photosystem II CP43 reaction center protein.